A 157-amino-acid polypeptide reads, in one-letter code: Transcription elongation factor GreA (157 aa).

This sequence belongs to the GreA/GreB family.

Its function is as follows. Necessary for efficient RNA polymerase transcription elongation past template-encoded arresting sites. The arresting sites in DNA have the property of trapping a certain fraction of elongating RNA polymerases that pass through, resulting in locked ternary complexes. Cleavage of the nascent transcript by cleavage factors such as GreA or GreB allows the resumption of elongation from the new 3'terminus. GreA releases sequences of 2 to 3 nucleotides. This is Transcription elongation factor GreA from Maricaulis maris (strain MCS10) (Caulobacter maris).